A 289-amino-acid polypeptide reads, in one-letter code: Phosphoribulokinase (289 aa).

An ATP-binding site is contributed by 12-20 (GSSGAGTTT).

It belongs to the phosphoribulokinase family.

The catalysed reaction is D-ribulose 5-phosphate + ATP = D-ribulose 1,5-bisphosphate + ADP + H(+). Its pathway is carbohydrate biosynthesis; Calvin cycle. In Sinorhizobium medicae (strain WSM419) (Ensifer medicae), this protein is Phosphoribulokinase (cbbP).